The following is a 384-amino-acid chain: F-box only protein 5-B (384 aa).

Disordered stretches follow at residues 1-20 (MMCG…KSSA) and 79-106 (DEEN…ETDS). Low complexity predominate over residues 9-19 (PSPKKLLSKSS). Residues 83-99 (SSLQDSGYSSILQNDSP) show a composition bias toward polar residues. An F-box domain is found at 191–238 (AELFHRDFKHLLTKILRHLNAMDLINVIGVSTTWRKILQKDNWAYNTY). The ZBR-type zinc finger occupies 311–359 (SLKACVDCGSPAKYDSYLHRAICTRESCKLDFCTLCSCKYHSSKSCLIS). Zn(2+)-binding residues include C315, C318, C333, C338, C343, C346, H351, and C356.

In terms of assembly, part of a SCF (SKP1-cullin-F-box) protein ligase complex. Interacts with btrc. Interacts with skp1. Interacts with cdc20. Interacts with pin1; stabilizes fbxo5 by preventing its association with btrc in an isomerization-dependent pathway; this interaction is present during G2 phase and prevents fbxo5 degradation. Interacts with plk1. Proteolysed; proteolysis is induced by both cyclin B-cdk1 and cyclin A-cdk1/2 complex through probable phosphorylation. Proteolysis is inhibited by pin1 during G2.

It localises to the nucleus. The protein resides in the cytoplasm. Its subcellular location is the cytoskeleton. The protein localises to the spindle. It is found in the microtubule organizing center. It localises to the centrosome. It participates in protein modification; protein ubiquitination. Functionally, regulates progression through early mitosis by inhibiting the anaphase promoting complex/cyclosome (APC). Binds to the APC activators cdc20 to prevent APC activation. Can also bind directly to the APC to inhibit substrate-binding. Required to arrest unfertilized eggs at metaphase of meiosis II, by preventing their release from metaphase of meiosis II, through inhibition of APC-dependent cyclin B destruction leading to stabilization of cyclin B-cdk1 complex activity. The protein is F-box only protein 5-B (fbxo5-b) of Xenopus laevis (African clawed frog).